The following is a 622-amino-acid chain: Chaperone protein HscA homolog (622 aa).

Belongs to the heat shock protein 70 family.

Chaperone involved in the maturation of iron-sulfur cluster-containing proteins. Has a low intrinsic ATPase activity which is markedly stimulated by HscB. The chain is Chaperone protein HscA homolog from Acidovorax ebreus (strain TPSY) (Diaphorobacter sp. (strain TPSY)).